A 306-amino-acid chain; its full sequence is Acetyl-coenzyme A carboxylase carboxyl transferase subunit beta (306 aa).

Residues 27–296 (LWHKCPSCEA…PRFVAPVIEP (270 aa)) enclose the CoA carboxyltransferase N-terminal domain. Zn(2+)-binding residues include Cys31, Cys34, Cys50, and Cys53. The C4-type zinc finger occupies 31–53 (CPSCEAVLYRPELEKTLDVCPKC).

The protein belongs to the AccD/PCCB family. Acetyl-CoA carboxylase is a heterohexamer composed of biotin carboxyl carrier protein (AccB), biotin carboxylase (AccC) and two subunits each of ACCase subunit alpha (AccA) and ACCase subunit beta (AccD). Requires Zn(2+) as cofactor.

The protein localises to the cytoplasm. It catalyses the reaction N(6)-carboxybiotinyl-L-lysyl-[protein] + acetyl-CoA = N(6)-biotinyl-L-lysyl-[protein] + malonyl-CoA. Its pathway is lipid metabolism; malonyl-CoA biosynthesis; malonyl-CoA from acetyl-CoA: step 1/1. Its function is as follows. Component of the acetyl coenzyme A carboxylase (ACC) complex. Biotin carboxylase (BC) catalyzes the carboxylation of biotin on its carrier protein (BCCP) and then the CO(2) group is transferred by the transcarboxylase to acetyl-CoA to form malonyl-CoA. The chain is Acetyl-coenzyme A carboxylase carboxyl transferase subunit beta from Pseudomonas syringae pv. syringae (strain B728a).